A 432-amino-acid polypeptide reads, in one-letter code: Histidinol dehydrogenase (432 aa).

3 residues coordinate NAD(+): Tyr130, Gln191, and Asn214. Substrate-binding residues include Ser237, Gln259, and His262. Zn(2+) is bound by residues Gln259 and His262. Catalysis depends on proton acceptor residues Glu327 and His328. Positions 328, 361, 415, and 420 each coordinate substrate. Asp361 contributes to the Zn(2+) binding site. Residue His420 participates in Zn(2+) binding.

The protein belongs to the histidinol dehydrogenase family. The cofactor is Zn(2+).

It catalyses the reaction L-histidinol + 2 NAD(+) + H2O = L-histidine + 2 NADH + 3 H(+). Its pathway is amino-acid biosynthesis; L-histidine biosynthesis; L-histidine from 5-phospho-alpha-D-ribose 1-diphosphate: step 9/9. In terms of biological role, catalyzes the sequential NAD-dependent oxidations of L-histidinol to L-histidinaldehyde and then to L-histidine. This is Histidinol dehydrogenase from Agrobacterium fabrum (strain C58 / ATCC 33970) (Agrobacterium tumefaciens (strain C58)).